Here is a 198-residue protein sequence, read N- to C-terminus: NAD(P)H dehydrogenase (quinone) (198 aa).

Positions 4–189 (VLVLYYSMYG…SIARYQGEYV (186 aa)) constitute a Flavodoxin-like domain. FMN is bound by residues 10 to 15 (SMYGHI) and 78 to 80 (TRF). Y12 provides a ligand contact to NAD(+). W98 is a substrate binding site. Residues 113–118 (STGTGG) and H133 each bind FMN.

This sequence belongs to the WrbA family. It depends on FMN as a cofactor.

It carries out the reaction a quinone + NADH + H(+) = a quinol + NAD(+). The enzyme catalyses a quinone + NADPH + H(+) = a quinol + NADP(+). The polypeptide is NAD(P)H dehydrogenase (quinone) (Escherichia coli O157:H7).